Here is a 232-residue protein sequence, read N- to C-terminus: Sugar fermentation stimulation protein homolog (232 aa).

The protein belongs to the SfsA family.

The protein is Sugar fermentation stimulation protein homolog of Alkaliphilus metalliredigens (strain QYMF).